A 162-amino-acid polypeptide reads, in one-letter code: MNPVRKKRLIIVLAIVVGVGAAVGLALSALQQNINLFYTPTQIANGEAPTDTRIRAGGLVEKGSLQRSEDSLNVRFVVTDGAKEVTIAYHGILPDLFREGQGIVALGKLGGDGVLVADEVLAKHDENYMPPEVTKALKDSGQLKHYENGKAAGETSYNQEGK.

The Cytoplasmic segment spans residues 1–8 (MNPVRKKR). Residues 9–29 (LIIVLAIVVGVGAAVGLALSA) traverse the membrane as a helical; Signal-anchor for type II membrane protein segment. The Periplasmic portion of the chain corresponds to 30-162 (LQQNINLFYT…GETSYNQEGK (133 aa)). Heme-binding residues include His-124 and Tyr-128. Over residues 139–148 (DSGQLKHYEN) the composition is skewed to basic and acidic residues. The disordered stretch occupies residues 139–162 (DSGQLKHYENGKAAGETSYNQEGK).

It belongs to the CcmE/CycJ family.

The protein resides in the cell inner membrane. Functionally, heme chaperone required for the biogenesis of c-type cytochromes. Transiently binds heme delivered by CcmC and transfers the heme to apo-cytochromes in a process facilitated by CcmF and CcmH. This is Cytochrome c-type biogenesis protein CcmE from Pseudomonas aeruginosa (strain LESB58).